The chain runs to 349 residues: N-acetyl-gamma-glutamyl-phosphate reductase (349 aa).

Cysteine 152 is a catalytic residue.

It belongs to the NAGSA dehydrogenase family. Type 1 subfamily.

Its subcellular location is the cytoplasm. It carries out the reaction N-acetyl-L-glutamate 5-semialdehyde + phosphate + NADP(+) = N-acetyl-L-glutamyl 5-phosphate + NADPH + H(+). Its pathway is amino-acid biosynthesis; L-arginine biosynthesis; N(2)-acetyl-L-ornithine from L-glutamate: step 3/4. Catalyzes the NADPH-dependent reduction of N-acetyl-5-glutamyl phosphate to yield N-acetyl-L-glutamate 5-semialdehyde. This chain is N-acetyl-gamma-glutamyl-phosphate reductase, found in Clavibacter sepedonicus (Clavibacter michiganensis subsp. sepedonicus).